The primary structure comprises 450 residues: Glucose-6-phosphate isomerase (450 aa).

A Phosphothreonine modification is found at Thr-39. Glu-291 functions as the Proton donor in the catalytic mechanism. Active-site residues include His-312 and Lys-426.

It belongs to the GPI family.

The protein localises to the cytoplasm. The catalysed reaction is alpha-D-glucose 6-phosphate = beta-D-fructose 6-phosphate. It participates in carbohydrate biosynthesis; gluconeogenesis. The protein operates within carbohydrate degradation; glycolysis; D-glyceraldehyde 3-phosphate and glycerone phosphate from D-glucose: step 2/4. In terms of biological role, catalyzes the reversible isomerization of glucose-6-phosphate to fructose-6-phosphate. The chain is Glucose-6-phosphate isomerase from Bacillus cereus (strain G9842).